Reading from the N-terminus, the 552-residue chain is Chaperonin GroEL (552 aa).

Residues 30–33, lysine 51, 87–91, glycine 415, 479–481, and aspartate 495 contribute to the ATP site; these read TLGP, DGTTT, and NAA.

It belongs to the chaperonin (HSP60) family. Forms a cylinder of 14 subunits composed of two heptameric rings stacked back-to-back. Interacts with the co-chaperonin GroES.

Its subcellular location is the cytoplasm. The enzyme catalyses ATP + H2O + a folded polypeptide = ADP + phosphate + an unfolded polypeptide.. Functionally, together with its co-chaperonin GroES, plays an essential role in assisting protein folding. The GroEL-GroES system forms a nano-cage that allows encapsulation of the non-native substrate proteins and provides a physical environment optimized to promote and accelerate protein folding. The chain is Chaperonin GroEL from Stutzerimonas stutzeri (Pseudomonas stutzeri).